We begin with the raw amino-acid sequence, 130 residues long: Small ribosomal subunit protein uS11 (130 aa).

The protein belongs to the universal ribosomal protein uS11 family. In terms of assembly, part of the 30S ribosomal subunit. Interacts with proteins S7 and S18. Binds to IF-3.

Functionally, located on the platform of the 30S subunit, it bridges several disparate RNA helices of the 16S rRNA. Forms part of the Shine-Dalgarno cleft in the 70S ribosome. The chain is Small ribosomal subunit protein uS11 from Prochlorococcus marinus (strain MIT 9515).